The chain runs to 134 residues: Replication enhancer protein (134 aa).

It belongs to the geminiviridae replication enhancer protein family. Homooligomer. Interacts with the replication-associated protein (REP). Interacts with host proliferating cell nuclear antigen (PCNA). Interacts with host retinoblastoma-related protein 1 (RBR1), and may thereby deregulate the host cell cycle. Oligomerization and interaction with PCNA are necessary for optimal replication enhancement.

Increases viral DNA accumulation. Enhances infectivity and symptom expression. This Squash leaf curl virus (SLCV) protein is Replication enhancer protein.